Consider the following 122-residue polypeptide: Small ribosomal subunit protein uS13 (122 aa).

A disordered region spans residues 97–122 (PVRGQRTHTNAKTRKGRSRLPIAGKK).

Belongs to the universal ribosomal protein uS13 family. As to quaternary structure, part of the 30S ribosomal subunit. Forms a loose heterodimer with protein S19. Forms two bridges to the 50S subunit in the 70S ribosome.

Functionally, located at the top of the head of the 30S subunit, it contacts several helices of the 16S rRNA. In the 70S ribosome it contacts the 23S rRNA (bridge B1a) and protein L5 of the 50S subunit (bridge B1b), connecting the 2 subunits; these bridges are implicated in subunit movement. Contacts the tRNAs in the A and P-sites. In Wolbachia pipientis wMel, this protein is Small ribosomal subunit protein uS13.